A 1489-amino-acid polypeptide reads, in one-letter code: Calmodulin-regulated spectrin-associated protein 2 (1489 aa).

The 114-residue stretch at 222-335 folds into the Calponin-homology (CH) domain; that stretch reads WKLVPARYRK…FMAELFWWFE (114 aa). Residues 375–415 form a disordered region; sequence SSDFPSSGEGATFTQSHHHLPSRYSRPQAHSSASGGIRRSS. Residues 405–415 show a composition bias toward low complexity; it reads SSASGGIRRSS. Serine 416 and serine 418 each carry phosphoserine. Threonine 426 is subject to Phosphothreonine. A phosphoserine mark is found at serine 464, serine 598, serine 599, serine 611, and serine 673. Disordered stretches follow at residues 611–639 and 668–730; these read SPITDNTEVDTGIHVPSEDIPETMDEDSS and TREA…GSEL. Residues 668-679 show a composition bias toward polar residues; sequence TREALSPCPSTV. Phosphothreonine is present on threonine 678. At serine 680 the chain carries Phosphoserine. The span at 680 to 699 shows a compositional bias: low complexity; it reads STKSQPGSSASSSSGVKMTS. Basic and acidic residues predominate over residues 703 to 713; it reads QKFRKLNHTDG. Residues 756 to 793 are a coiled coil; it reads LLASEMVHLRMKLEEKRRAIEAQKKKMEAAFTKQRQKM. Residues 812-844 are disordered; sequence LREEAAGAEDEKVYTDRAKEKESQKTDGQRSKS. Residue serine 862 is modified to Phosphoserine. Residues 887–926 adopt a coiled-coil conformation; the sequence is EILEYTKSIEKLNSSLHFLQQEMQRLSLQQEMLMQMREQQ. An MBD region region spans residues 922 to 1034; the sequence is MREQQSWVIS…IQTRSFVCFG (113 aa). Positions 925 to 1017 are disordered; the sequence is QQSWVISPPQ…SVDSLPRLRR (93 aa). Phosphoserine occurs at positions 931 and 936. A compositionally biased stretch (polar residues) spans 960-989; it reads SSDSPRPTHPSPQSSNRKSASFSVKSQRTP. Phosphothreonine is present on residues threonine 997, threonine 1002, and threonine 1004. Residues serine 1008 and serine 1019 each carry the phosphoserine modification. 3 disordered regions span residues 1032–1078, 1096–1152, and 1191–1349; these read CFGD…PFES, PNED…DKEQ, and KETQ…EYTG. A compositionally biased stretch (basic and acidic residues) spans 1039-1075; that stretch reads PQLKESKPKEEVKKEELESKGTLEQRGHNPEEKEIKP. The span at 1105–1117 shows a compositional bias: pro residues; it reads TEPPPKPVFPPTA. Basic and acidic residues-rich tracts occupy residues 1132-1152 and 1191-1252; these read KPPEKADVPVEKYDGESDKEQ and KETQ…DTVI. At serine 1148 the chain carries Phosphoserine. A coiled-coil region spans residues 1166–1238; sequence KDDQKAENDM…REFIRQEYMR (73 aa). The segment covering 1287–1299 has biased composition (polar residues); it reads SSLSLASLNTGDN. Phosphoserine is present on residues serine 1313, serine 1319, and serine 1321. The segment covering 1334–1346 has biased composition (polar residues); the sequence is NASTTSSVASGTE. The CKK domain maps to 1349 to 1483; that stretch reads GPKLYKEPSA…QTKRPVTPKK (135 aa).

The protein belongs to the CAMSAP1 family. In terms of assembly, interacts with CAMSAP3. Interacts with KATNA1 and KATNB1; leading to regulate the length of CAMSAP2-decorated microtubule stretches. Interacts with a complex formed by AKAP9 and PDE4DIP isoform 13/MMG8/SMYLE, which recruits CAMSAP2 to the Golgi. Interacts with MAPRE1/EB1.

It localises to the cytoplasm. The protein localises to the cytoskeleton. It is found in the golgi apparatus. The protein resides in the cilium basal body. In terms of biological role, key microtubule-organizing protein that specifically binds the minus-end of non-centrosomal microtubules and regulates their dynamics and organization. Specifically recognizes growing microtubule minus-ends and autonomously decorates and stabilizes microtubule lattice formed by microtubule minus-end polymerization. Acts on free microtubule minus-ends that are not capped by microtubule-nucleating proteins or other factors and protects microtubule minus-ends from depolymerization. In addition, it also reduces the velocity of microtubule polymerization. Through the microtubule cytoskeleton, also regulates the organization of cellular organelles including the Golgi and the early endosomes. Essential for the tethering, but not for nucleation of non-centrosomal microtubules at the Golgi: together with Golgi-associated proteins AKAP9 and PDE4DIP, required to tether non-centrosomal minus-end microtubules to the Golgi, an important step for polarized cell movement. Also acts as a regulator of neuronal polarity and development: localizes to non-centrosomal microtubule minus-ends in neurons and stabilizes non-centrosomal microtubules, which is required for neuronal polarity, axon specification and dendritic branch formation. Through the microtubule cytoskeleton, regulates the autophagosome transport. In Homo sapiens (Human), this protein is Calmodulin-regulated spectrin-associated protein 2.